Here is a 508-residue protein sequence, read N- to C-terminus: Glycerol kinase (508 aa).

Threonine 14 is an ADP binding site. ATP contacts are provided by threonine 14, threonine 15, and serine 16. Threonine 14 lines the sn-glycerol 3-phosphate pocket. Arginine 18 serves as a coordination point for ADP. Sn-glycerol 3-phosphate is bound by residues arginine 84, glutamate 85, and tyrosine 136. Arginine 84, glutamate 85, and tyrosine 136 together coordinate glycerol. A Phosphohistidine; by HPr modification is found at histidine 232. Residue aspartate 246 participates in sn-glycerol 3-phosphate binding. The glycerol site is built by aspartate 246 and glutamine 247. Positions 268 and 311 each coordinate ADP. ATP-binding residues include threonine 268, glycine 311, glutamine 315, and glycine 412. ADP is bound by residues glycine 412 and asparagine 416.

Belongs to the FGGY kinase family. Homotetramer and homodimer (in equilibrium). The phosphoenolpyruvate-dependent sugar phosphotransferase system (PTS), including enzyme I, and histidine-containing protein (HPr) are required for the phosphorylation, which leads to the activation of the enzyme.

The enzyme catalyses glycerol + ATP = sn-glycerol 3-phosphate + ADP + H(+). Its pathway is polyol metabolism; glycerol degradation via glycerol kinase pathway; sn-glycerol 3-phosphate from glycerol: step 1/1. Its activity is regulated as follows. Activated by phosphorylation and inhibited by fructose 1,6-bisphosphate (FBP). In terms of biological role, key enzyme in the regulation of glycerol uptake and metabolism. Catalyzes the phosphorylation of glycerol to yield sn-glycerol 3-phosphate. The chain is Glycerol kinase from Streptococcus pyogenes serotype M12 (strain MGAS2096).